A 453-amino-acid polypeptide reads, in one-letter code: uncharacterized protein (453 aa).

Positions 5 to 63 (LLKKNQSIELTIEDLTHDGSGVGKIDGYPFFIPNTLPGEKVTAKIIKLNKNYGFARMEN) constitute a TRAM domain. The [4Fe-4S] cluster site is built by cysteine 76, cysteine 82, cysteine 85, and cysteine 162. Glutamine 285, tyrosine 314, glutamate 335, and aspartate 383 together coordinate S-adenosyl-L-methionine. The Nucleophile role is filled by cysteine 410.

This sequence belongs to the class I-like SAM-binding methyltransferase superfamily. RNA M5U methyltransferase family.

This is an uncharacterized protein from Listeria monocytogenes serovar 1/2a (strain ATCC BAA-679 / EGD-e).